Reading from the N-terminus, the 340-residue chain is N-acetyl-gamma-glutamyl-phosphate reductase (340 aa).

Residue Cys149 is part of the active site.

Belongs to the NAGSA dehydrogenase family. Type 1 subfamily.

The protein resides in the cytoplasm. The catalysed reaction is N-acetyl-L-glutamate 5-semialdehyde + phosphate + NADP(+) = N-acetyl-L-glutamyl 5-phosphate + NADPH + H(+). The protein operates within amino-acid biosynthesis; L-arginine biosynthesis; N(2)-acetyl-L-ornithine from L-glutamate: step 3/4. Its function is as follows. Catalyzes the NADPH-dependent reduction of N-acetyl-5-glutamyl phosphate to yield N-acetyl-L-glutamate 5-semialdehyde. This Vesicomyosocius okutanii subsp. Calyptogena okutanii (strain HA) protein is N-acetyl-gamma-glutamyl-phosphate reductase.